Consider the following 498-residue polypeptide: Aminotransferase swnA (498 aa).

It belongs to the class-I pyridoxal-phosphate-dependent aminotransferase family. Pyridoxal 5'-phosphate serves as cofactor.

The protein operates within mycotoxin biosynthesis. Aminotransferase; part of the gene cluster that mediates the biosynthesis of swainsonine (SW), a cytotoxic fungal alkaloid and a potential cancer therapy drug. Swainsonine production occurs via a multibranched pathway and is dispensable for fungal colonization of plants and infection of insect hosts. The first step of swainsonine biosynthesis is the production of the precursor pipecolic acid (PA) via conversion of L-lysine (Lys) to 1-piperideine-6-carboxylate (P6C) by the aminotransferase swnA, the latter being further reduced to PA by the reductase swnR. PA can be converted from lysine by both the SW biosynthetic cluster and the unclustered genes such as lysine cyclodeaminase. The PKS-NRPS hybrid synthetase swnK uptakes and condensates PA and malonyl-CoA with and without skipping of the ketoreductase (KR) domain in order to produce 3 intermediates, 1-oxoindolizidine, (1S)-1-hydroxyindolizin, and (1R)-1-hydroxyindolizine; with the transisomer (1S)-1-hydroxyindolizin being predominant. The terminal thioester reductase (TE) domain of swnK is involved in reduction of the thioester bond to release the intermediate aldehydes. The oxidoreductase swnN could contribute to the reduction of 1-oxoindolizidine to (1S)-1-hydroxyindolizin and (1R)-1-hydroxyindolizine, contributing to the major route of SW production. The dioxygenase swnH2 would be responsible for the oxidization of (1R)-1-hydroxyindolizine into (1R,2S)-1,2-dihydroxyindolizine and of (1S)-1-hydroxyindolizin to yield both (1R,2S)-1,2-dihydroxyindolizine and (1S,2S)-1,2-dihydroxyindolizine. The dioxygenase swnH1 then performs the conversion of the 1,2-dihydroxyindolizine epimers to SW. The protein is Aminotransferase swnA of Metarhizium robertsii (strain ARSEF 23 / ATCC MYA-3075) (Metarhizium anisopliae (strain ARSEF 23)).